The sequence spans 279 residues: uncharacterized protein (279 aa).

Positions 1–28 are disordered; sequence MGLFGGGNSKSTSNQTTNNENTNIATQG. Residues 9–23 show a composition bias toward low complexity; the sequence is SKSTSNQTTNNENTN. The helical transmembrane segment at 256–273 threads the bilayer; sequence KTLMIGIVAVSAAVGLYA.

The protein localises to the host membrane. This is an uncharacterized protein from Pseudoalteromonas espejiana (Bacteriophage PM2).